A 425-amino-acid chain; its full sequence is Sucrose-phosphatase 2 (425 aa).

Belongs to the sucrose phosphatase family. In terms of assembly, homodimer. The cofactor is Mg(2+).

It carries out the reaction sucrose 6(F)-phosphate + H2O = sucrose + phosphate. The protein operates within glycan biosynthesis; sucrose biosynthesis; sucrose from D-fructose 6-phosphate and UDP-alpha-D-glucose: step 2/2. Inhibited by EDTA. Its function is as follows. Catalyzes the final step of sucrose synthesis. The sequence is that of Sucrose-phosphatase 2 (SPP2) from Nicotiana tabacum (Common tobacco).